Consider the following 540-residue polypeptide: Protein dml-1 (540 aa).

The tract at residues 517–540 is disordered; it reads NELAEMADEYHEGWSSGSDDGDDD.

This sequence belongs to the misato family.

Its subcellular location is the mitochondrion. Functionally, involved in the partitioning of the mitochondrial organelle and mitochondrial DNA (mtDNA) inheritance. This Neurospora crassa (strain ATCC 24698 / 74-OR23-1A / CBS 708.71 / DSM 1257 / FGSC 987) protein is Protein dml-1 (dml-1).